The chain runs to 341 residues: Ketol-acid reductoisomerase (NADP(+)) (341 aa).

One can recognise a KARI N-terminal Rossmann domain in the interval 1 to 182; sequence MATIYYDKDA…GCTRAGVLET (182 aa). NADP(+)-binding positions include 25–28, Ser-51, Ser-53, and 83–86; these read YGSQ and DQTQ. His-108 is an active-site residue. Residue Gly-134 coordinates NADP(+). A KARI C-terminal knotted domain is found at 183 to 328; sequence TFKEETETDL…KRLRDMMSWI (146 aa). Mg(2+) contacts are provided by Asp-191, Glu-195, Glu-227, and Glu-231. Ser-252 is a binding site for substrate.

It belongs to the ketol-acid reductoisomerase family. Requires Mg(2+) as cofactor.

It catalyses the reaction (2R)-2,3-dihydroxy-3-methylbutanoate + NADP(+) = (2S)-2-acetolactate + NADPH + H(+). The catalysed reaction is (2R,3R)-2,3-dihydroxy-3-methylpentanoate + NADP(+) = (S)-2-ethyl-2-hydroxy-3-oxobutanoate + NADPH + H(+). It participates in amino-acid biosynthesis; L-isoleucine biosynthesis; L-isoleucine from 2-oxobutanoate: step 2/4. It functions in the pathway amino-acid biosynthesis; L-valine biosynthesis; L-valine from pyruvate: step 2/4. Its function is as follows. Involved in the biosynthesis of branched-chain amino acids (BCAA). Catalyzes an alkyl-migration followed by a ketol-acid reduction of (S)-2-acetolactate (S2AL) to yield (R)-2,3-dihydroxy-isovalerate. In the isomerase reaction, S2AL is rearranged via a Mg-dependent methyl migration to produce 3-hydroxy-3-methyl-2-ketobutyrate (HMKB). In the reductase reaction, this 2-ketoacid undergoes a metal-dependent reduction by NADPH to yield (R)-2,3-dihydroxy-isovalerate. This chain is Ketol-acid reductoisomerase (NADP(+)), found in Anaeromyxobacter dehalogenans (strain 2CP-C).